We begin with the raw amino-acid sequence, 168 residues long: Gremlin-2 (168 aa).

Positions 1-21 (MFWKLSLTLLLVAVLVKVAET) are cleaved as a signal peptide. N-linked (GlcNAc...) asparagine glycosylation is present at N40. Disulfide bonds link C73-C123, C87-C137, C97-C155, and C101-C157. Positions 73-163 (CKTQPLRQTV…HCRCMSVNLS (91 aa)) constitute a CTCK domain. A glycan (N-linked (GlcNAc...) asparagine) is linked at N161.

The protein belongs to the DAN family. In terms of assembly, homodimer. Interacts with BMP2, BMP4 and BMP7, but has lower affinity for BMP7 than for BMP2 and BMP4. Binds heparin; this impairs the interaction with BMP2. In terms of processing, N-glycosylated. In terms of tissue distribution, highly expressed in the ovary, followed by brain, spleen, colon, kidney and uterus. In ovary expressed in granulosa cells of selective early antral follicles.

It localises to the secreted. Its function is as follows. Cytokine that inhibits the activity of BMP2 and BMP4 in a dose-dependent manner, and thereby modulates signaling by BMP family members. Contributes to the regulation of embryonic morphogenesis via BMP family members. Antagonizes BMP4-induced suppression of progesterone production in granulosa cells. The chain is Gremlin-2 (Grem2) from Mus musculus (Mouse).